The chain runs to 377 residues: Mannan endo-1,4-beta-mannosidase A (377 aa).

A signal peptide spans 1–18 (MKLSHMLLSLASLGVATA). Tryptophan 84 contributes to the substrate binding site. Asparagine 105 carries N-linked (GlcNAc...) asparagine glycosylation. Asparagine 197 serves as a coordination point for substrate. Residue glutamate 198 is the Proton donor of the active site. N-linked (GlcNAc...) asparagine glycosylation occurs at asparagine 255. Tyrosine 273 is a binding site for substrate. The active-site Nucleophile is glutamate 306. Asparagine 326 carries N-linked (GlcNAc...) asparagine glycosylation. Tryptophan 336 is a substrate binding site. Residue asparagine 357 is glycosylated (N-linked (GlcNAc...) asparagine).

The protein belongs to the glycosyl hydrolase 5 (cellulase A) family.

It localises to the secreted. It carries out the reaction Random hydrolysis of (1-&gt;4)-beta-D-mannosidic linkages in mannans, galactomannans and glucomannans.. In terms of biological role, endo-1,4-mannanase, a crucial enzyme for depolymerization of seed galactomannans and wood galactoglucomannans. This Aspergillus aculeatus protein is Mannan endo-1,4-beta-mannosidase A (manA).